A 428-amino-acid chain; its full sequence is UPF0053 inner membrane protein YfjD (428 aa).

Topologically, residues 1 to 3 (MEH) are cytoplasmic. Residues 2 to 192 (EHISTTTLII…SQISRRNQDM (191 aa)) enclose the CNNM transmembrane domain. The chain crosses the membrane as a helical span at residues 4–24 (ISTTTLIIILIIMVVISAYFS). Residues 25–64 (GSETGMMTLNRYRLRHMAKQGNRSAKRVEKLLRKPDRLIS) are Periplasmic-facing. Residues 65 to 85 (LVLIGNNLVNILASALGTIVG) form a helical membrane-spanning segment. Residues 86 to 91 (MRLYGD) are Cytoplasmic-facing. A helical transmembrane segment spans residues 92 to 112 (AGVAIATGVLTFVVLVFAEVL). Over 113 to 129 (PKTIAALYPEKVAYPSS) the chain is Periplasmic. A helical transmembrane segment spans residues 130 to 150 (FLLAPLQILMMPLVWLLNAIT). Residues 151–428 (RMLMRMMGIK…VKPLRESVAE (278 aa)) lie on the Cytoplasmic side of the membrane. CBS domains are found at residues 208 to 270 (MVPR…FTKE) and 272 to 332 (MLRA…FTTS).

The protein belongs to the UPF0053 family.

The protein resides in the cell inner membrane. This chain is UPF0053 inner membrane protein YfjD (yfjD), found in Escherichia coli (strain K12).